The following is a 445-amino-acid chain: Tubulin beta chain (445 aa).

The GTP site is built by Gln11, Glu69, Ser138, Gly142, Thr143, Gly144, Asn204, and Asn226. Position 69 (Glu69) interacts with Mg(2+). Residues 426–445 form a disordered region; that stretch reads QDATAEEEGEFEEEEGDVEA. The segment covering 429–445 has biased composition (acidic residues); the sequence is TAEEEGEFEEEEGDVEA.

It belongs to the tubulin family. As to quaternary structure, dimer of alpha and beta chains. A typical microtubule is a hollow water-filled tube with an outer diameter of 25 nm and an inner diameter of 15 nM. Alpha-beta heterodimers associate head-to-tail to form protofilaments running lengthwise along the microtubule wall with the beta-tubulin subunit facing the microtubule plus end conferring a structural polarity. Microtubules usually have 13 protofilaments but different protofilament numbers can be found in some organisms and specialized cells. Interacts with DCX/apicortin; the interaction stabilizes microtubule assembly. Requires Mg(2+) as cofactor.

It localises to the cytoplasm. The protein resides in the cytoskeleton. Tubulin is the major constituent of microtubules, a cylinder consisting of laterally associated linear protofilaments composed of alpha- and beta-tubulin heterodimers. Microtubules grow by the addition of GTP-tubulin dimers to the microtubule end, where a stabilizing cap forms. Below the cap, tubulin dimers are in GDP-bound state, owing to GTPase activity of alpha-tubulin. This is Tubulin beta chain from Plasmodium falciparum.